A 101-amino-acid polypeptide reads, in one-letter code: Thiosulfate sulfurtransferase GlpE (101 aa).

A Rhodanese domain is found at 17 to 101 (EAKSVQIVDI…GFSAWHEANA (85 aa)). The active-site Cysteine persulfide intermediate is cysteine 65.

It belongs to the GlpE family.

Its subcellular location is the cytoplasm. The catalysed reaction is thiosulfate + hydrogen cyanide = thiocyanate + sulfite + 2 H(+). It catalyses the reaction thiosulfate + [thioredoxin]-dithiol = [thioredoxin]-disulfide + hydrogen sulfide + sulfite + 2 H(+). Its function is as follows. Transferase that catalyzes the transfer of sulfur from thiosulfate to thiophilic acceptors such as cyanide or dithiols. May function in a CysM-independent thiosulfate assimilation pathway by catalyzing the conversion of thiosulfate to sulfite, which can then be used for L-cysteine biosynthesis. This chain is Thiosulfate sulfurtransferase GlpE, found in Shewanella oneidensis (strain ATCC 700550 / JCM 31522 / CIP 106686 / LMG 19005 / NCIMB 14063 / MR-1).